A 93-amino-acid polypeptide reads, in one-letter code: Envelope small membrane protein (93 aa).

The Virion surface portion of the chain corresponds to 1–11 (MMNLLNKSLEE). The chain crosses the membrane as a helical span at residues 12–32 (NGSVLTAFYIFVAFVALYLLG). Residues 33–93 (RALQAFVQAA…NEFPKNGWKQ (61 aa)) lie on the Intravirion side of the membrane.

It belongs to the gammacoronaviruses E protein family. In terms of assembly, homooligomer. Interacts with the M membrane protein in the budding compartment of the host cell, which is located between endoplasmic reticulum and the Golgi complex. The cytoplasmic tails of both proteins are important for this function. Interacts with Nucleoprotein.

It localises to the host Golgi apparatus membrane. In terms of biological role, plays a central role in virus morphogenesis and assembly. Acts as a viroporin and self-assembles in host membranes forming pentameric protein-lipid pores that allow ion transport. Also plays a role in the induction of apoptosis. This Avian infectious bronchitis virus (strain Portugal/322/82) (IBV) protein is Envelope small membrane protein.